We begin with the raw amino-acid sequence, 670 residues long: DNA ligase (670 aa).

Residues 32 to 36, 81 to 82, and Glu114 contribute to the NAD(+) site; these read DSEYD and SL. Residue Lys116 is the N6-AMP-lysine intermediate of the active site. NAD(+) is bound by residues Arg137, Glu174, Lys291, and Lys315. Zn(2+) contacts are provided by Cys409, Cys412, Cys427, and Cys433. A BRCT domain is found at 592–670; it reads ASENLFKDKT…EEEFLAQITR (79 aa).

It belongs to the NAD-dependent DNA ligase family. LigA subfamily. Requires Mg(2+) as cofactor. The cofactor is Mn(2+).

The enzyme catalyses NAD(+) + (deoxyribonucleotide)n-3'-hydroxyl + 5'-phospho-(deoxyribonucleotide)m = (deoxyribonucleotide)n+m + AMP + beta-nicotinamide D-nucleotide.. Its function is as follows. DNA ligase that catalyzes the formation of phosphodiester linkages between 5'-phosphoryl and 3'-hydroxyl groups in double-stranded DNA using NAD as a coenzyme and as the energy source for the reaction. It is essential for DNA replication and repair of damaged DNA. In Haemophilus influenzae (strain 86-028NP), this protein is DNA ligase.